Consider the following 562-residue polypeptide: Potassium-transporting ATPase potassium-binding subunit (562 aa).

12 consecutive transmembrane segments (helical) span residues 6-26 (FLLIASFMLVLLLLARPLGSF), 62-82 (YALAILWFNLLGLALLFALLM), 132-152 (GLAVQNFLSAATGIAVAFALI), 170-190 (VFRITLYVLLPISLLIALFFV), 253-273 (FVQMLAIFLIPCALCFSFGQV), 283-303 (LIWAMSLIFVVAVVVVMYAEL), 327-347 (FGILATSMFSVVTTAASCGAV), 356-376 (ALGGMVPMWLMQIGEVVFGGV), 379-399 (GLYGMLLFVLLTVFIAGLMIG), 416-436 (MTALAILVTPTLVLLGSALAI), 483-503 (LLLAFAMFVGRFGVILPVLAI), and 526-546 (LFIGLLVGTVLLVGALTFVPA).

It belongs to the KdpA family. In terms of assembly, the system is composed of three essential subunits: KdpA, KdpB and KdpC.

It is found in the cell inner membrane. Its function is as follows. Part of the high-affinity ATP-driven potassium transport (or Kdp) system, which catalyzes the hydrolysis of ATP coupled with the electrogenic transport of potassium into the cytoplasm. This subunit binds the periplasmic potassium ions and delivers the ions to the membrane domain of KdpB through an intramembrane tunnel. This Serratia proteamaculans (strain 568) protein is Potassium-transporting ATPase potassium-binding subunit.